A 142-amino-acid chain; its full sequence is Alpha-lactalbumin (142 aa).

Positions 1 to 19 (MMSFVSLLLVGILFHATQA) are cleaved as a signal peptide. The C-type lysozyme domain occupies 20–142 (EQLTKCEVFQ…KLDQWLCEKL (123 aa)). 4 disulfide bridges follow: Cys-25/Cys-139, Cys-47/Cys-130, Cys-80/Cys-96, and Cys-92/Cys-110. Residues Asn-64 and Asn-93 are each glycosylated (N-linked (GlcNAc...) asparagine). Residues Lys-98, Asp-101, Asp-103, Asp-106, and Asp-107 each coordinate Ca(2+).

Belongs to the glycosyl hydrolase 22 family. As to quaternary structure, lactose synthase (LS) is a heterodimer of a catalytic component, beta1,4-galactosyltransferase (beta4Gal-T1) and a regulatory component, alpha-lactalbumin (LA). Mammary gland specific. Secreted in milk.

The protein localises to the secreted. Regulatory subunit of lactose synthase, changes the substrate specificity of galactosyltransferase in the mammary gland making glucose a good acceptor substrate for this enzyme. This enables LS to synthesize lactose, the major carbohydrate component of milk. In other tissues, galactosyltransferase transfers galactose onto the N-acetylglucosamine of the oligosaccharide chains in glycoproteins. This Capra hircus (Goat) protein is Alpha-lactalbumin (LALBA).